A 1330-amino-acid chain; its full sequence is MSRLIFEARRRLAPPSSHQGTIIIEAPPELPRVIPPSLLRRALPYLIGILIVGMIVALVATGMRVISPQTLFFPFVLLLAATALYRGNDKKMRTEEVDAERADYLRYLSVVRDNIRAQAAEQRASALWSHPDPTALASVPGSRRQWERDPHDPDFLVLRAGRHTVPLATTLRVNDTADEIDLEPVSHSALRSLLDTQRSIGDVPTGIDLTKVSRITVLGERAQVRAVLRAWIAQAVTWHDPTVLGVALAARDLEGRDWNWLKWLPHVDIPGRLDALGPARNLSTDPDELIALLGPVLADRPAFTGQPTDALRHLLIVVDDPDYDLGASPLAVGRAGVTVVHCSASAPHREQYSDPEKPILRVAHGAIERWQTGGWQPYIDAADQFSADEAAHLARRLSRWDSNPTHAGLRSAATRGASFTTLLGIEDASRLDVPALWAPRRRDEELRVPIGVTGTGEPLMFDLKDEAEGGMGPHGLMIGMTGSGKSQTLMSILLSLLTTHSAERLIVIYADFKGEAGADSFRDFPQVVAVISNMAEKKSLADRFADTLRGEVARREMLLREAGRKVQGSAFNSVLEYENAIAAGHSLPPIPTLFVVADEFTLMLADHPEYAELFDYVARKGRSFRIHILFASQTLDVGKIKDIDKNTAYRIGLKVASPSVSRQIIGVEDAYHIESGKEHKGVGFLVPAPGATPIRFRSTYVDGIYEPPQTAKAVVVQSVPEPKLFTAAAVEPDPGTVIADTDEQEPADPPRKLIATIGEQLARYGPRAPQLWLPPLDETIPLSAALARAGVGPRQWRWPLGEIDRPFEMRRDPLVFDARSSAGNMVIHGGPKSGKSTALQTFILSAASLHSPHEVSFYCLDYGGGQLRALQDLAHVGSVASALEPERIRRTFGELEQLLLSRQQREVFRDRGANGSTPDDGFGEVFLVIDNLYGFGRDNTDQFNTRNPLLARVTELVNVGLAYGIHVIITTPSWLEVPLAMRDGLGLRLELRLHDARDSNVRVVGALRRPADAVPHDQPGRGLTMAAEHFLFAAPELDAQTNPVAAINARYPGMAAPPVRLLPTNLAPHAVGELYRGPDQLVIGQREEDLAPVILDLAANPLLMVFGDARSGKTTLLRHIIRTVREHSTADRVAFTVLDRRLHLVDEPLFPDNEYTANIDRIIPAMLGLANLIEARRPPAGMSAAELSRWTFAGHTHYLIIDDVDQVPDSPAMTGPYIGQRPWTPLIGLLAQAGDLGLRVIVTGRATGSAHLLMTSPLLRRFNDLQATTLMLAGNPADSGKIRGERFARLPAGRAILLTDSDSPTYVQLINPLVDAAAVSGETQQKGSQS.

2 helical membrane passes run 43 to 63 (LPYL…ATGM) and 65 to 85 (VISP…TALY). 3 FtsK domains span residues 456 to 662 (GEPL…SVSR), 811 to 1000 (RDPL…RDSN), and 1090 to 1280 (LAPV…ADSG). Residues 479–486 (GMTGSGKS), 829–836 (GGPKSGKS), and 1107–1114 (GDARSGKT) each bind ATP.

Part of the ESX-3 / type VII secretion system (T7SS), which is composed of cytosolic and membrane components. The ESX-3 membrane complex is composed of EccB3, EccC3, EccD3 and EccE3.

The protein resides in the cell inner membrane. Functionally, part of the ESX-3 specialized secretion system, which is important for iron and zinc uptake or homeostasis. This Mycobacterium tuberculosis (strain CDC 1551 / Oshkosh) protein is ESX-3 secretion system protein EccC3.